We begin with the raw amino-acid sequence, 467 residues long: Ribulose bisphosphate carboxylase large chain (467 aa).

Residues 1–2 constitute a propeptide that is removed on maturation; it reads MS. P3 is modified (N-acetylproline). At K14 the chain carries N6,N6,N6-trimethyllysine. Residues N123 and T173 each coordinate substrate. K175 acts as the Proton acceptor in catalysis. K177 contributes to the substrate binding site. Positions 201, 203, and 204 each coordinate Mg(2+). An N6-carboxylysine modification is found at K201. H294 acts as the Proton acceptor in catalysis. Substrate is bound by residues R295, H327, and S379.

Belongs to the RuBisCO large chain family. Type I subfamily. In terms of assembly, heterohexadecamer of 8 large chains and 8 small chains; disulfide-linked. The disulfide link is formed within the large subunit homodimers. Mg(2+) is required as a cofactor. The disulfide bond which can form in the large chain dimeric partners within the hexadecamer appears to be associated with oxidative stress and protein turnover.

The protein localises to the plastid. Its subcellular location is the chloroplast. It catalyses the reaction 2 (2R)-3-phosphoglycerate + 2 H(+) = D-ribulose 1,5-bisphosphate + CO2 + H2O. The catalysed reaction is D-ribulose 1,5-bisphosphate + O2 = 2-phosphoglycolate + (2R)-3-phosphoglycerate + 2 H(+). Its function is as follows. RuBisCO catalyzes two reactions: the carboxylation of D-ribulose 1,5-bisphosphate, the primary event in carbon dioxide fixation, as well as the oxidative fragmentation of the pentose substrate in the photorespiration process. Both reactions occur simultaneously and in competition at the same active site. This chain is Ribulose bisphosphate carboxylase large chain, found in Phoenix reclinata (Senegal date palm).